Consider the following 358-residue polypeptide: DnaJ homolog subfamily C member 18 (358 aa).

Positions 82–146 (NYYEILGVSR…DKRLRYDEYG (65 aa)) constitute a J domain. A helical transmembrane segment spans residues 228–248 (AFIQLLPVLVIVIISVITQLL).

The protein resides in the endoplasmic reticulum membrane. In Bos taurus (Bovine), this protein is DnaJ homolog subfamily C member 18 (DNAJC18).